The chain runs to 276 residues: Undecaprenyl-diphosphatase 2 (276 aa).

The next 8 helical transmembrane spans lie at 1-21 (MSLWFLVFLSVLQGVTELFPV), 44-64 (QLLPFLVALHLGTALALLWYF), 87-107 (GHLMWALIIGTIPTGIVGLLL), 114-134 (VFHDLRIVAIALIVNGVLLWL), 150-170 (MTFKQAFFVGLAQIGALIPGF), 190-210 (AAEFSFLLGTPIIFAAGVLEL), 222-242 (DALLGGVLTAIAAYLSVRFLM), and 251-271 (LASFGVYCVIAGVFCLGWFML).

The protein belongs to the UppP family.

The protein resides in the cell inner membrane. It catalyses the reaction di-trans,octa-cis-undecaprenyl diphosphate + H2O = di-trans,octa-cis-undecaprenyl phosphate + phosphate + H(+). In terms of biological role, catalyzes the dephosphorylation of undecaprenyl diphosphate (UPP). Confers resistance to bacitracin. This chain is Undecaprenyl-diphosphatase 2, found in Burkholderia orbicola (strain AU 1054).